Here is a 397-residue protein sequence, read N- to C-terminus: Diphosphomevalonate decarboxylase (397 aa).

(R)-5-diphosphomevalonate-binding positions include 19 to 22 (YWGK), Arg-74, 153 to 158 (SGSACR), and Thr-209. The segment at 378–397 (GPGPQDTKSSLIDPETGLPR) is disordered.

Belongs to the diphosphomevalonate decarboxylase family. In terms of assembly, homodimer.

The enzyme catalyses (R)-5-diphosphomevalonate + ATP = isopentenyl diphosphate + ADP + phosphate + CO2. The protein operates within isoprenoid biosynthesis; isopentenyl diphosphate biosynthesis via mevalonate pathway; isopentenyl diphosphate from (R)-mevalonate: step 3/3. Functionally, diphosphomevalonate decarboxylase; part of the second module of ergosterol biosynthesis pathway that includes the middle steps of the pathway. The second module is carried out in the vacuole and involves the formation of farnesyl diphosphate, which is also an important intermediate in the biosynthesis of ubiquinone, dolichol, heme and prenylated proteins. Activity by the mevalonate kinase ERG12 first converts mevalonate into 5-phosphomevalonate. 5-phosphomevalonate is then further converted to 5-diphosphomevalonate by the phosphomevalonate kinase ERG8. The diphosphomevalonate decarboxylase MVD1/ERG19 then produces isopentenyl diphosphate. The isopentenyl-diphosphate delta-isomerase IDI1 then catalyzes the 1,3-allylic rearrangement of the homoallylic substrate isopentenyl (IPP) to its highly electrophilic allylic isomer, dimethylallyl diphosphate (DMAPP). Finally the farnesyl diphosphate synthase ERG20 catalyzes the sequential condensation of isopentenyl pyrophosphate with dimethylallyl pyrophosphate, and then with the resultant geranylpyrophosphate to the ultimate product farnesyl pyrophosphate. In Eremothecium gossypii (strain ATCC 10895 / CBS 109.51 / FGSC 9923 / NRRL Y-1056) (Yeast), this protein is Diphosphomevalonate decarboxylase.